The following is a 495-amino-acid chain: Oxidoreductase AflY (495 aa).

The tract at residues 1-22 (MGSHAPAVAGKPDPKKGPYQAT) is disordered.

This sequence belongs to the questin oxidase family.

It participates in mycotoxin biosynthesis; aflatoxin biosynthesis. Its function is as follows. Oxidoreductase; part of the gene cluster that mediates the biosynthesis of aflatoxins, a group of polyketide-derived furanocoumarins, and part of the most toxic and carcinogenic compounds among the known mycotoxins. The four major aflatoxins produced by A.parasiticus are aflatoxin B1 (AFB1), aflatoxin B2 (AFB2), aflatoxin G1 (AFG1) and aflatoxin G2 (AFG2). Within the aflatoxin pathway, the oxidoreductase aflY seems to be involved in the conversion of versicolorin A (VERA) to demethylsterigmatocystin (DMST), through probable Baeyer-Villiger oxidation required for the formation of the xanthone ring. The biosynthesis of aflatoxins begins with the norsolorinic acid synthase aflC that combines a hexanoyl starter unit produced by the fatty acid synthase aflA/aflB and 7 malonyl-CoA extender units to synthesize the precursor NOR. The second step is the conversion of NOR to averantin and requires the norsolorinic acid ketoreductase aflD, which catalyzes the dehydration of norsolorinic acid to form (1'S)-averantin. The norsolorinic acid reductases aflE and aflF may also play a role in the conversion of NOR to AVN. The cytochrome P450 monooxygenase aflG then catalyzes the hydroxylation of AVN to 5'hydroxyaverantin (HAVN). The next step is performed by the 5'-hydroxyaverantin dehydrogenase aflH that transforms HAVN to 5'-oxoaverantin (OAVN) which is further converted to averufin (AVF) by aflK that plays a dual role in the pathway, as a 5'-oxoaverantin cyclase that mediates conversion of 5'-oxoaverantin, as well as a versicolorin B synthase in a later step in the pathway. The averufin oxidase aflI catalyzes the conversion of AVF to versiconal hemiacetal acetate (VHA). VHA is then the substrate for the versiconal hemiacetal acetate esterase aflJ to yield versiconal (VAL). Versicolorin B synthase aflK then converts VAL to versicolorin B (VERB) by closing the bisfuran ring of aflatoxin which is required for DNA-binding, thus giving to aflatoxin its activity as a mutagen. Then, the activity of the versicolorin B desaturase aflL leads to versicolorin A (VERA). A branch point starts from VERB since it can also be converted to dihydrodemethylsterigmatocystin (DMDHST), probably also by aflL, VERA being a precursor for aflatoxins B1 and G1, and DMDHST for aflatoxins B2 and G2. Next, the versicolorin reductase aflM and the cytochrome P450 monooxygenase aflN are involved in conversion of VERA to demethylsterigmatocystin (DMST). AflX and aflY seem also involved in this step, through probable aflX-mediated epoxide ring-opening step following versicolorin A oxidation and aflY-mediated Baeyer-Villiger oxidation required for the formation of the xanthone ring. The methyltransferase aflO then leads to the modification of DMST to sterigmatocystin (ST), and of DMDHST to dihydrosterigmatocystin (DHST). Both ST and DHST are then substrates of the O-methyltransferase aflP to yield O-methylsterigmatocystin (OMST) and dihydro-O-methylsterigmatocystin (DHOMST), respectively. Finally OMST is converted to aflatoxins B1 and G1, and DHOMST to aflatoxins B2 and G2, via the action of several enzymes including O-methylsterigmatocystin oxidoreductase aflQ, the cytochrome P450 monooxygenase aflU, but also the NADH-dependent flavin oxidoreductase nadA which is specifically required for the synthesis of AFG1. The polypeptide is Oxidoreductase AflY (Aspergillus parasiticus (strain ATCC 56775 / NRRL 5862 / SRRC 143 / SU-1)).